Reading from the N-terminus, the 565-residue chain is Deformed epidermal autoregulatory factor 1 homolog (565 aa).

Disordered regions lie at residues 34-62 (GGEA…ETPR) and 162-190 (GLKG…KGGT). A compositionally biased stretch (pro residues) spans 169-181 (PLTPGPQSPPTPL). A Phosphothreonine modification is found at T171. S176 is modified (phosphoserine). T179 is subject to Phosphothreonine. Positions 193-273 (NWDPSVYDSE…QCLIQDGILN (81 aa)) constitute an SAND domain. A Nuclear localization signal motif is present at residues 301 to 316 (KRRKKENELPTTPVKK). The segment at 403–478 (IAPFPEAALP…QLKTLFEQAK (76 aa)) is interaction with LMO4. The residue at position 432 (T432) is a Phosphothreonine. At S448 the chain carries Phosphoserine. The Zn(2+) site is built by C504, C507, C515, C518, C524, C528, H536, and C540. The MYND-type zinc finger occupies 504-540 (CVNCGREAMNECTGCHKVNYCSTFCQRKDWKDHQHIC).

As to quaternary structure, homodimer. Interacts with LMO4; LMO4 blocks export from nucleus. Interacts with LMO2 and CLIM2. May interact with the corepressors NCOR1 and NCRO2. Identified in a complex with XRCC5 and XRCC6. Interacts (via the SAND domain) with the DNA-PK complex subunit XRCC6; the interaction is direct and may be inhibited by DNA-binding. May be phosphorylated by DNA-PK complex in a DNA independent manner (in vitro).

The protein resides in the nucleus. Transcription factor that binds to sequence with multiple copies of 5'-TTC[CG]G-3' present in its own promoter and that of the HNRPA2B1 gene. Down-regulates transcription of these genes. Binds to the retinoic acid response element (RARE) 5'-AGGGTTCACCGAAAGTTCA-3'. Activates the proenkephalin gene independently of promoter binding, probably through protein-protein interaction. Regulates epithelial cell proliferation and side-branching in the mammary gland. Required for neural tube closure and skeletal patterning. Controls the expression of peripheral tissue antigens in pancreatic lymph nodes. Transcriptional activator of EIF4G3. May also involved in behavior. In Pan troglodytes (Chimpanzee), this protein is Deformed epidermal autoregulatory factor 1 homolog (DEAF1).